A 211-amino-acid chain; its full sequence is Probable nicotinate-nucleotide adenylyltransferase (211 aa).

Belongs to the NadD family.

The catalysed reaction is nicotinate beta-D-ribonucleotide + ATP + H(+) = deamido-NAD(+) + diphosphate. It participates in cofactor biosynthesis; NAD(+) biosynthesis; deamido-NAD(+) from nicotinate D-ribonucleotide: step 1/1. In terms of biological role, catalyzes the reversible adenylation of nicotinate mononucleotide (NaMN) to nicotinic acid adenine dinucleotide (NaAD). This chain is Probable nicotinate-nucleotide adenylyltransferase, found in Legionella pneumophila (strain Corby).